The primary structure comprises 214 residues: A-type ATP synthase subunit D (214 aa).

The protein belongs to the V-ATPase D subunit family. Has multiple subunits with at least A(3), B(3), C, D, E, F, H, I and proteolipid K(x).

It localises to the cell membrane. Functionally, component of the A-type ATP synthase that produces ATP from ADP in the presence of a proton gradient across the membrane. The polypeptide is A-type ATP synthase subunit D (Pyrococcus horikoshii (strain ATCC 700860 / DSM 12428 / JCM 9974 / NBRC 100139 / OT-3)).